We begin with the raw amino-acid sequence, 376 residues long: UDP-N-acetylglucosamine--N-acetylmuramyl-(pentapeptide) pyrophosphoryl-undecaprenol N-acetylglucosamine transferase (376 aa).

Residues 11–13 (TGG), N117, R160, S208, and Q310 contribute to the UDP-N-acetyl-alpha-D-glucosamine site.

Belongs to the glycosyltransferase 28 family. MurG subfamily.

Its subcellular location is the cell inner membrane. It carries out the reaction di-trans,octa-cis-undecaprenyl diphospho-N-acetyl-alpha-D-muramoyl-L-alanyl-D-glutamyl-meso-2,6-diaminopimeloyl-D-alanyl-D-alanine + UDP-N-acetyl-alpha-D-glucosamine = di-trans,octa-cis-undecaprenyl diphospho-[N-acetyl-alpha-D-glucosaminyl-(1-&gt;4)]-N-acetyl-alpha-D-muramoyl-L-alanyl-D-glutamyl-meso-2,6-diaminopimeloyl-D-alanyl-D-alanine + UDP + H(+). It functions in the pathway cell wall biogenesis; peptidoglycan biosynthesis. Its function is as follows. Cell wall formation. Catalyzes the transfer of a GlcNAc subunit on undecaprenyl-pyrophosphoryl-MurNAc-pentapeptide (lipid intermediate I) to form undecaprenyl-pyrophosphoryl-MurNAc-(pentapeptide)GlcNAc (lipid intermediate II). The sequence is that of UDP-N-acetylglucosamine--N-acetylmuramyl-(pentapeptide) pyrophosphoryl-undecaprenol N-acetylglucosamine transferase from Rickettsia massiliae (strain Mtu5).